The primary structure comprises 464 residues: Keratin, type I cytoskeletal 28 (464 aa).

Positions 1-85 (MSLQFSNGSR…GSEGGLLSGN (85 aa)) are head. Residues 86 to 121 (EKVTMQNLNDRLASYLDNVRALEEANAELERKIKGW) form a coil 1A region. An IF rod domain is found at 86–401 (EKVTMQNLND…RLIDGDGNSC (316 aa)). The linker 1 stretch occupies residues 122–143 (YEKYGPGSCRGLDHDYSRYHLT). The coil 1B stretch occupies residues 144–235 (IEDLKNKIIS…KNHEEEMKAL (92 aa)). Residues 236 to 258 (QCAAGGNVNVEMNAAPGVDLAVL) form a linker 12 region. Residues 259-397 (LNNMRAEYEA…ETYCRLIDGD (139 aa)) form a coil 2 region. The tail stretch occupies residues 398–464 (GNSCSKSKGF…NGKTEQRVPF (67 aa)). A disordered region spans residues 443–464 (IHSIEEKTSKMTNGKTEQRVPF).

This sequence belongs to the intermediate filament family. In terms of assembly, heterotetramer of two type I and two type II keratins. Strongly expressed in skin and scalp, and weak expression observed in thymus. In the hair follicle, expressed in Henle layer, Huxley layer and in the irs cuticle. Expression extends from the bulb region up to the point of differentiation into the three layers. Also present in the medulla of beard hair (at protein level).

It is found in the cytoplasm. Functionally, essential for the proper assembly of types I and II keratin protein complexes and the formation of keratin intermediate filaments in the inner root sheath (irs). The chain is Keratin, type I cytoskeletal 28 from Homo sapiens (Human).